Here is a 242-residue protein sequence, read N- to C-terminus: Probable 2-phosphosulfolactate phosphatase (242 aa).

It belongs to the ComB family. It depends on Mg(2+) as a cofactor.

It catalyses the reaction (2R)-O-phospho-3-sulfolactate + H2O = (2R)-3-sulfolactate + phosphate. This chain is Probable 2-phosphosulfolactate phosphatase, found in Caldicellulosiruptor saccharolyticus (strain ATCC 43494 / DSM 8903 / Tp8T 6331).